Consider the following 802-residue polypeptide: Homeobox-leucine zipper protein ANTHOCYANINLESS 2 (802 aa).

The segment at 71-143 is disordered; the sequence is QPERGTNRGE…RKKRYHRHTP (73 aa). Residues 103–113 show a composition bias toward basic and acidic residues; the sequence is RSREEEHESRS. A compositionally biased stretch (basic residues) spans 133 to 142; sequence PRKKRYHRHT. Residues 134–193 constitute a DNA-binding region (homeobox); sequence RKKRYHRHTPQQIQELESMFKECPHPDEKQRLELSKRLCLETRQVKFWFQNRRTQMKTQL. A coiled-coil region spans residues 182 to 221; sequence FQNRRTQMKTQLERHENALLRQENDKLRAENMSIREAMRN. In terms of domain architecture, START spans 315–546; it reads GIDQKSVLLE…LQRQCECLAI (232 aa).

Belongs to the HD-ZIP homeobox family. Class IV subfamily. Interacts with AIL7/PLT7, ANT, BBM and AIL1. In terms of tissue distribution, expressed in roots, stems, leaves and floral buds.

It localises to the nucleus. In terms of biological role, probable transcription factor involved in the regulation of the tissue-specific accumulation of anthocyanins and in cellular organization of the primary root. The sequence is that of Homeobox-leucine zipper protein ANTHOCYANINLESS 2 from Arabidopsis thaliana (Mouse-ear cress).